The sequence spans 22 residues: Magnificalysin II (22 aa).

Residues 3–12 (ALAGTIIDGA) form a plays an important role in the hemolytic activity region. The segment at 11–22 (GASLGFDILNKV) is N-terminal region.

The protein belongs to the actinoporin family. Sea anemone subfamily. Octamer or nonamer in membranes. Monomer in the soluble state.

Its subcellular location is the secreted. It localises to the nematocyst. It is found in the target cell membrane. Functionally, pore-forming protein that forms cations-selective hydrophilic pores of around 1 nm and causes cytolysis. Pore formation is a multi-step process that involves specific recognition of membrane sphingomyelin (but neither cholesterol nor phosphatidylcholine) using aromatic rich region and adjacent phosphocholine (POC) binding site, firm binding to the membrane (mainly driven by hydrophobic interactions) accompanied by the transfer of the N-terminal region to the lipid-water interface and finally pore formation after oligomerization of monomers. This Heteractis magnifica (Magnificent sea anemone) protein is Magnificalysin II.